The sequence spans 282 residues: NADPH-dependent 7-cyano-7-deazaguanine reductase (282 aa).

88 to 90 (IES) is a binding site for substrate. NADPH is bound at residue 90–91 (SK). Cys-190 functions as the Thioimide intermediate in the catalytic mechanism. Asp-197 functions as the Proton donor in the catalytic mechanism. 229–230 (HE) provides a ligand contact to substrate. NADPH is bound at residue 258–259 (RG).

Belongs to the GTP cyclohydrolase I family. QueF type 2 subfamily. As to quaternary structure, homodimer.

Its subcellular location is the cytoplasm. The catalysed reaction is 7-aminomethyl-7-carbaguanine + 2 NADP(+) = 7-cyano-7-deazaguanine + 2 NADPH + 3 H(+). Its pathway is tRNA modification; tRNA-queuosine biosynthesis. Its function is as follows. Catalyzes the NADPH-dependent reduction of 7-cyano-7-deazaguanine (preQ0) to 7-aminomethyl-7-deazaguanine (preQ1). The protein is NADPH-dependent 7-cyano-7-deazaguanine reductase of Escherichia coli O9:H4 (strain HS).